We begin with the raw amino-acid sequence, 446 residues long: Glutamine synthetase (446 aa).

In terms of domain architecture, GS beta-grasp spans 14-107 (NNVKFLRFQF…IICDVYRKNG (94 aa)). The region spanning 114-446 (PRGCLKRVLA…DWEFNKYVRI (333 aa)) is the GS catalytic domain. Mg(2+) is bound by residues glutamate 138 and glutamate 140. Glutamate 187 is an ATP binding site. Glutamate 192 and glutamate 199 together coordinate Mg(2+). Residues 243-244 (NG) and glycine 244 each bind L-glutamate. Residue histidine 248 participates in Mg(2+) binding. Serine 252 provides a ligand contact to ATP. L-glutamate contacts are provided by arginine 301, glutamate 307, and arginine 319. ATP contacts are provided by arginine 319, arginine 324, and lysine 331. Glutamate 336 provides a ligand contact to Mg(2+). Arginine 338 contacts L-glutamate.

The protein belongs to the glutamine synthetase family. Oligomer of 12 subunits arranged in the form of two hexagons. Requires Mg(2+) as cofactor.

The protein resides in the cytoplasm. It carries out the reaction L-glutamate + NH4(+) + ATP = L-glutamine + ADP + phosphate + H(+). In terms of biological role, probably involved in nitrogen metabolism via ammonium assimilation. Catalyzes the ATP-dependent biosynthesis of glutamine from glutamate and ammonia. The protein is Glutamine synthetase of Methanococcus voltae.